The chain runs to 121 residues: Ribosome-binding factor A (121 aa).

This sequence belongs to the RbfA family. Monomer. Binds 30S ribosomal subunits, but not 50S ribosomal subunits or 70S ribosomes.

It localises to the cytoplasm. One of several proteins that assist in the late maturation steps of the functional core of the 30S ribosomal subunit. Associates with free 30S ribosomal subunits (but not with 30S subunits that are part of 70S ribosomes or polysomes). Required for efficient processing of 16S rRNA. May interact with the 5'-terminal helix region of 16S rRNA. The protein is Ribosome-binding factor A of Heliobacterium modesticaldum (strain ATCC 51547 / Ice1).